The primary structure comprises 410 residues: Transcription factor SPN1 (410 aa).

The segment at 1-132 (MSTADQEQPK…SRQELEEKLD (132 aa)) is disordered. At T15 the chain carries Phosphothreonine. Residues 20 to 52 (TASSQKSTINAENENTKQNQSMEPQETSKGTSN) show a composition bias toward polar residues. A Phosphoserine; by ATM or ATR modification is found at S23. At S40 the chain carries Phosphoserine. A compositionally biased stretch (basic and acidic residues) spans 53–65 (DTKDPDNGEKNEE). Phosphoserine is present on S85. Residue T86 is modified to Phosphothreonine. Residue S89 is modified to Phosphoserine. Positions 219 to 296 (QSVRIWLEPL…AEWTRPIIGA (78 aa)) constitute a TFIIS N-terminal domain. The tract at residues 318–346 (KSVMDSAKNRKKKSKSGEDPTSRGSSVQT) is disordered.

It belongs to the IWS1 family. Interacts with ABD1, RBP1, SPT5 and SPT6.

The protein resides in the nucleus. In terms of biological role, transcription factor involved in RNA polymerase II transcription regulation. May function in both SPT15/TBP post-recruitment and recruitment steps of transcription. This chain is Transcription factor SPN1 (SPN1), found in Saccharomyces cerevisiae (strain ATCC 204508 / S288c) (Baker's yeast).